We begin with the raw amino-acid sequence, 205 residues long: Imidazoleglycerol-phosphate dehydratase (205 aa).

Belongs to the imidazoleglycerol-phosphate dehydratase family.

The protein localises to the cytoplasm. The enzyme catalyses D-erythro-1-(imidazol-4-yl)glycerol 3-phosphate = 3-(imidazol-4-yl)-2-oxopropyl phosphate + H2O. It participates in amino-acid biosynthesis; L-histidine biosynthesis; L-histidine from 5-phospho-alpha-D-ribose 1-diphosphate: step 6/9. The sequence is that of Imidazoleglycerol-phosphate dehydratase from Chloroflexus aurantiacus (strain ATCC 29366 / DSM 635 / J-10-fl).